The primary structure comprises 312 residues: Large ribosomal subunit protein uL10 (312 aa).

Lys-14 participates in a covalent cross-link: Glycyl lysine isopeptide (Lys-Gly) (interchain with G-Cter in ubiquitin). Residue Ser-68 is modified to Phosphoserine. Glycyl lysine isopeptide (Lys-Gly) (interchain with G-Cter in ubiquitin) cross-links involve residues Lys-97 and Lys-144. An interaction with P1A-P2B region spans residues 199 to 230 (SSILDITDEELVSHFVSAVSTIASISLAIGYP). The interval 231 to 258 (TLPSVGHTLINNYKDLLAVAIAASYHYP) is interaction with P1B-P2A. The segment covering 278–293 (PAATSAASGDAAPAEE) has biased composition (low complexity). Residues 278 to 312 (PAATSAASGDAAPAEEAAAEEEEESDDDMGFGLFD) are disordered. Residues 294-306 (AAAEEEEESDDDM) are compositionally biased toward acidic residues. Residue Ser-302 is modified to Phosphoserine; by CK2.

It belongs to the universal ribosomal protein uL10 family. As to quaternary structure, component of the large ribosomal subunit (LSU). Mature yeast ribosomes consist of a small (40S) and a large (60S) subunit. The 40S small subunit contains 1 molecule of ribosomal RNA (18S rRNA) and 33 different proteins (encoded by 57 genes). The large 60S subunit contains 3 rRNA molecules (25S, 5.8S and 5S rRNA) and 46 different proteins (encoded by 81 genes). The 5 acidic ribosomal P-proteins form the stalk structure of the 60S subunit. They are organized as a pentameric complex in which uL10/P0 interacts with 2 heterodimers, P1A-P2B and P1B-P2A. uL10 directly interacts with 28S rRNA. uL10 interacts with YFL034W.

The protein resides in the cytoplasm. Its function is as follows. Component of the ribosome, a large ribonucleoprotein complex responsible for the synthesis of proteins in the cell. The small ribosomal subunit (SSU) binds messenger RNAs (mRNAs) and translates the encoded message by selecting cognate aminoacyl-transfer RNA (tRNA) molecules. The large subunit (LSU) contains the ribosomal catalytic site termed the peptidyl transferase center (PTC), which catalyzes the formation of peptide bonds, thereby polymerizing the amino acids delivered by tRNAs into a polypeptide chain. The nascent polypeptides leave the ribosome through a tunnel in the LSU and interact with protein factors that function in enzymatic processing, targeting, and the membrane insertion of nascent chains at the exit of the ribosomal tunnel. uL10 forms part of the P stalk that participates in recruiting G proteins to the ribosome. This is Large ribosomal subunit protein uL10 from Saccharomyces cerevisiae (strain ATCC 204508 / S288c) (Baker's yeast).